Reading from the N-terminus, the 444-residue chain is Killer cell immunoglobulin-like receptor 3DL1 (444 aa).

An N-terminal signal peptide occupies residues 1-21; that stretch reads MSLMVVSMACVGLFLVQRAGP. Residues 22-340 lie on the Extracellular side of the membrane; sequence HMGGQDKPFL…SKSGNPRHLH (319 aa). Ig-like C2-type domains lie at 42 to 102, 137 to 202, and 237 to 300; these read GGHV…HPHS, GERV…VTHT, and GESV…FRHS. Cystine bridges form between cysteine 49–cysteine 95, cysteine 144–cysteine 195, and cysteine 244–cysteine 293. Residues asparagine 92, asparagine 179, and asparagine 273 are each glycosylated (N-linked (GlcNAc...) asparagine). The interval 315–334 is disordered; that stretch reads VTGNPSSSWPSPTEPSSKSG. Residues 319 to 333 are compositionally biased toward low complexity; sequence PSSSWPSPTEPSSKS. A helical membrane pass occupies residues 341–360; that stretch reads ILIGTSVVIILFILLLFFLL. Residues 361 to 444 are Cytoplasmic-facing; the sequence is HLWCSNKKNA…KPRSKVVSCP (84 aa). 2 disordered regions span residues 375 to 394 and 409 to 444; these read QEPA…QDPE and RKIT…VSCP.

Belongs to the immunoglobulin superfamily.

The protein localises to the cell membrane. Functionally, receptor on natural killer (NK) cells for HLA Bw4 allele. Inhibits the activity of NK cells thus preventing cell lysis. The sequence is that of Killer cell immunoglobulin-like receptor 3DL1 from Homo sapiens (Human).